Here is a 342-residue protein sequence, read N- to C-terminus: Trans-3-hydroxy-L-proline dehydratase (342 aa).

Ser-90 serves as the catalytic Proton acceptor. Substrate contacts are provided by residues Gly-91–Ser-92, Asp-252, and Gly-257–Thr-258.

It belongs to the proline racemase family.

It catalyses the reaction trans-3-hydroxy-L-proline = 1-pyrroline-2-carboxylate + H2O. In terms of biological role, catalyzes the dehydration of trans-3-hydroxy-L-proline (t3LHyp) to Delta(1)-pyrroline-2-carboxylate (Pyr2C). Is likely involved in a degradation pathway that converts t3LHyp to L-proline. Displays neither proline racemase activity nor 4-hydroxyproline 2-epimerase activity. The sequence is that of Trans-3-hydroxy-L-proline dehydratase from Allorhizobium ampelinum (strain ATCC BAA-846 / DSM 112012 / S4) (Agrobacterium vitis (strain S4)).